A 295-amino-acid chain; its full sequence is MKDKIIRATAKNGMVRIIGGITTNLVNEGSKIHQCTPVAAAALGRMLTAGTLMGTTLKGEKEALTLKINGGGEAKGITVTAHNDASVKGFIGNPYVTRELNDKGKLDVGGAIGKDGLLYVIKDLGLKEPYVGQVPIYSGEIAEDFAYYFTVSEQTPSAVSLGVLVDKNLSIKAAGGFIVQMMPDADELLADLVTYRLEEIPPITTLISEGKSIEEILEFIFEGMDLNILDSIEPKYKCDCSREKVEKALASIGKNELQEIYDDGKNEEIVCNFCNTKYTFTTNDIDKLLKNSIKK.

Disulfide bonds link C238-C240 and C271-C274.

Belongs to the HSP33 family. Post-translationally, under oxidizing conditions two disulfide bonds are formed involving the reactive cysteines. Under reducing conditions zinc is bound to the reactive cysteines and the protein is inactive.

The protein localises to the cytoplasm. Functionally, redox regulated molecular chaperone. Protects both thermally unfolding and oxidatively damaged proteins from irreversible aggregation. Plays an important role in the bacterial defense system toward oxidative stress. The polypeptide is 33 kDa chaperonin (Clostridium botulinum (strain Eklund 17B / Type B)).